Consider the following 147-residue polypeptide: 3-hydroxyacyl-[acyl-carrier-protein] dehydratase FabZ (147 aa).

Residue His51 is part of the active site.

This sequence belongs to the thioester dehydratase family. FabZ subfamily.

It localises to the cytoplasm. The enzyme catalyses a (3R)-hydroxyacyl-[ACP] = a (2E)-enoyl-[ACP] + H2O. Involved in unsaturated fatty acids biosynthesis. Catalyzes the dehydration of short chain beta-hydroxyacyl-ACPs and long chain saturated and unsaturated beta-hydroxyacyl-ACPs. The protein is 3-hydroxyacyl-[acyl-carrier-protein] dehydratase FabZ of Anaplasma marginale (strain Florida).